The chain runs to 209 residues: Large ribosomal subunit protein uL3 (209 aa).

Gln150 carries the N5-methylglutamine modification.

The protein belongs to the universal ribosomal protein uL3 family. As to quaternary structure, part of the 50S ribosomal subunit. Forms a cluster with proteins L14 and L19. Post-translationally, methylated by PrmB.

In terms of biological role, one of the primary rRNA binding proteins, it binds directly near the 3'-end of the 23S rRNA, where it nucleates assembly of the 50S subunit. This chain is Large ribosomal subunit protein uL3, found in Vibrio vulnificus (strain YJ016).